A 106-amino-acid polypeptide reads, in one-letter code: NADH-quinone oxidoreductase subunit K (106 aa).

3 consecutive transmembrane segments (helical) span residues 8–28 (IGIENYIFLSVVLFCIGVFGV), 35–55 (IIVFMSIEIMLNAVNLLFVAF), and 66–86 (VFVFFSMAVAAAEVAVGLAIL).

The protein belongs to the complex I subunit 4L family. As to quaternary structure, NDH-1 is composed of 14 different subunits. Subunits NuoA, H, J, K, L, M, N constitute the membrane sector of the complex.

It is found in the cell inner membrane. It carries out the reaction a quinone + NADH + 5 H(+)(in) = a quinol + NAD(+) + 4 H(+)(out). Its function is as follows. NDH-1 shuttles electrons from NADH, via FMN and iron-sulfur (Fe-S) centers, to quinones in the respiratory chain. The immediate electron acceptor for the enzyme in this species is believed to be a menaquinone. Couples the redox reaction to proton translocation (for every two electrons transferred, four hydrogen ions are translocated across the cytoplasmic membrane), and thus conserves the redox energy in a proton gradient. The sequence is that of NADH-quinone oxidoreductase subunit K from Flavobacterium johnsoniae (strain ATCC 17061 / DSM 2064 / JCM 8514 / BCRC 14874 / CCUG 350202 / NBRC 14942 / NCIMB 11054 / UW101) (Cytophaga johnsonae).